Reading from the N-terminus, the 274-residue chain is Probable starch degradation products transport system permease protein AmyC (274 aa).

Helical transmembrane passes span 11–31, 73–93, 103–123, 139–159, 184–204, and 238–258; these read LTFLGIVLSLLWISPFYIILV, LIITVFSILIIAIFSSMTAYA, VIIYMIFTVAMLIPFQSVMIP, LVFMYLGFGSSLGVFLYYGAL, IILPLLNPTTITLAVLDIMWI, and WNLGMAGLTIAILPVVIFYFL. The 191-residue stretch at 69 to 259 folds into the ABC transmembrane type-1 domain; sequence FSNTLIITVF…LPVVIFYFLA (191 aa).

The protein belongs to the binding-protein-dependent transport system permease family. MalFG subfamily.

It localises to the cell membrane. Probably part of a binding-protein-dependent transport system starch degradation products. Probably responsible for the translocation of the substrate across the membrane. In Thermoanaerobacterium thermosulfurigenes (Clostridium thermosulfurogenes), this protein is Probable starch degradation products transport system permease protein AmyC (amyC).